A 310-amino-acid chain; its full sequence is Oxygen-dependent coproporphyrinogen-III oxidase (310 aa).

Ser97 is a binding site for substrate. Positions 101 and 111 each coordinate a divalent metal cation. His111 acts as the Proton donor in catalysis. A substrate-binding site is contributed by 113–115 (NFR). A divalent metal cation contacts are provided by His150 and His180. Residues 245–280 (YVEFNLLYDRGTRFGLEFGGRTESILMSLPPRVVWR) form an important for dimerization region. Position 263–265 (263–265 (GGR)) interacts with substrate.

This sequence belongs to the aerobic coproporphyrinogen-III oxidase family. In terms of assembly, homodimer. A divalent metal cation is required as a cofactor.

The protein localises to the cytoplasm. It carries out the reaction coproporphyrinogen III + O2 + 2 H(+) = protoporphyrinogen IX + 2 CO2 + 2 H2O. It participates in porphyrin-containing compound metabolism; protoporphyrin-IX biosynthesis; protoporphyrinogen-IX from coproporphyrinogen-III (O2 route): step 1/1. Involved in the heme biosynthesis. Catalyzes the aerobic oxidative decarboxylation of propionate groups of rings A and B of coproporphyrinogen-III to yield the vinyl groups in protoporphyrinogen-IX. The protein is Oxygen-dependent coproporphyrinogen-III oxidase of Coxiella burnetii (strain RSA 493 / Nine Mile phase I).